A 191-amino-acid polypeptide reads, in one-letter code: Peptide methionine sulfoxide reductase MsrA (191 aa).

Cys21 is an active-site residue.

The protein belongs to the MsrA Met sulfoxide reductase family.

It catalyses the reaction L-methionyl-[protein] + [thioredoxin]-disulfide + H2O = L-methionyl-(S)-S-oxide-[protein] + [thioredoxin]-dithiol. It carries out the reaction [thioredoxin]-disulfide + L-methionine + H2O = L-methionine (S)-S-oxide + [thioredoxin]-dithiol. Has an important function as a repair enzyme for proteins that have been inactivated by oxidation. Catalyzes the reversible oxidation-reduction of methionine sulfoxide in proteins to methionine. The protein is Peptide methionine sulfoxide reductase MsrA of Ralstonia nicotianae (strain ATCC BAA-1114 / GMI1000) (Ralstonia solanacearum).